The sequence spans 515 residues: Probable coatomer subunit delta (515 aa).

Positions 161 to 180 are enriched in basic and acidic residues; it reads AKQAMAEKAKELKRAQKEAL. A disordered region spans residues 161 to 231; that stretch reads AKQAMAEKAK…GGKALKLGGK (71 aa). The span at 187–198 shows a compositional bias: low complexity; that stretch reads SYQSSTGISSSS. Residues 276–515 form the MHD domain; the sequence is REVVHVRTEE…TFNSENFEIV (240 aa).

This sequence belongs to the adaptor complexes medium subunit family. Delta-COP subfamily. In terms of assembly, oligomeric complex that consists of at least the alpha, beta, beta', gamma, delta, epsilon and zeta subunits.

Its subcellular location is the cytoplasm. It is found in the golgi apparatus membrane. It localises to the cytoplasmic vesicle. The protein resides in the COPI-coated vesicle membrane. The coatomer is a cytosolic protein complex that binds to dilysine motifs and reversibly associates with Golgi non-clathrin-coated vesicles, which further mediate biosynthetic protein transport from the ER, via the Golgi up to the trans Golgi network. Coatomer complex is required for budding from Golgi membranes, and is essential for the retrograde Golgi-to-ER transport of dilysine-tagged proteins. The sequence is that of Probable coatomer subunit delta from Caenorhabditis elegans.